A 270-amino-acid polypeptide reads, in one-letter code: Putative phosphatase YxeH (270 aa).

Catalysis depends on Asp8, which acts as the Nucleophile. Residue Asp8 coordinates Mg(2+). Residue Met9 participates in phosphate binding. A Mg(2+)-binding site is contributed by Asp10. Residues Thr42–Gly43 and Lys196 contribute to the phosphate site. Residue Asp219 participates in Mg(2+) binding. Asn222 contacts phosphate.

This sequence belongs to the HAD-like hydrolase superfamily. Cof family. The cofactor is Mg(2+).

This Bacillus subtilis (strain 168) protein is Putative phosphatase YxeH (yxeH).